The following is a 493-amino-acid chain: MSLRFTNSLTSRTEAFEPLTEGKASIYCCGVTVYDLCHLGHARSYINWDVLRRYLIWRGYDVTYIQNYTDIDDKILNRANEEGITMQAVSERNIEAFEVDMGRLNILPADRMPRATGCIEGIQTLISELESKGAAYSSDGDVYFDISKAKNYGKLSGRDPDDQQQGASGRTADGEESRKRHPFDFALWKGAKAGEPSWESPWGPGRPGWHIECSAMVRQELGQTIDIHLGGGDLVFPHHENEIAQSETANGTTLAKLWMHNGMVNVGGTKMSKSLGNFTTIRALLDSGISPMTLRLFVLQAHYRKPLDFTAEALEAAATGWKGLNAALSLGGRHGESLGWSTAAPLAEGAMNADGGPADTALVELEQRFISAMDDDLNSSGGLAVLFDLAKPLRSLANRLERGEDAALPELELKGLEGRWQLLRHLAAVLGLRSEAEAAPSLDDGAIDVAIAARKAAKAAKDFAEADRIRDELAAQGVELIDKPGGVTEWIRA.

Zn(2+) is bound at residue C29. The 'HIGH' region signature appears at 31 to 41 (VTVYDLCHLGH). The interval 154–179 (KLSGRDPDDQQQGASGRTADGEESRK) is disordered. Positions 213, 238, and 242 each coordinate Zn(2+). The short motif at 270–274 (KMSKS) is the 'KMSKS' region element. K273 contacts ATP.

The protein belongs to the class-I aminoacyl-tRNA synthetase family. In terms of assembly, monomer. Requires Zn(2+) as cofactor.

Its subcellular location is the cytoplasm. It catalyses the reaction tRNA(Cys) + L-cysteine + ATP = L-cysteinyl-tRNA(Cys) + AMP + diphosphate. This chain is Cysteine--tRNA ligase, found in Synechococcus sp. (strain CC9605).